The sequence spans 95 residues: Small ubiquitin-related modifier 2-B (95 aa).

A Glycyl lysine isopeptide (Lys-Gly) (interchain with G-Cter in SUMO) cross-link involves residue lysine 11. The Ubiquitin-like domain maps to 16–95; that stretch reads DHINLKVAGQ…VFQQQTGGSY (80 aa). Glycine 93 is covalently cross-linked (Glycyl lysine isopeptide (Gly-Lys) (interchain with K-? in acceptor proteins)). The propeptide occupies 94–95; sequence SY.

It belongs to the ubiquitin family. SUMO subfamily. As to quaternary structure, interacts with sae2 and ube2i. Covalently attached to a number of proteins, including top2. In terms of processing, polymeric chains can be formed through Lys-11 cross-linking. Cleavage of precursor form by a sentrin-specific protease is necessary for function.

It localises to the nucleus. Ubiquitin-like protein that can be covalently attached to proteins as a monomer or as a lysine-linked polymer. Covalent attachment via an isopeptide bond to its substrates requires prior activation by the E1 complex sae1-sae2 and linkage to the E2 enzyme ube2i, and can be promoted by an E3 ligase such as pias1-4. This post-translational modification on lysine residues of proteins plays a crucial role in a number of cellular processes such as nuclear transport, DNA replication and repair, mitosis and signal transduction. Polymeric sumo2 chains are also susceptible to polyubiquitination which functions as a signal for proteasomal degradation of modified proteins. The protein is Small ubiquitin-related modifier 2-B (sumo2-b) of Xenopus laevis (African clawed frog).